Here is a 156-residue protein sequence, read N- to C-terminus: MSRRHKAEKREINPDPKFGDLVVTKFMNAIMLDGKKSVAENIVYGAFDVVQGKAKQEPLTVFHSALENIAPHVEVRSRRVGGATYQVPVDVRPERRQALAIRWLIAAARKRNETTMVDRLSGELLDASNNRGSAVKKREDTHKMADANRAFSHYRW.

Belongs to the universal ribosomal protein uS7 family. Part of the 30S ribosomal subunit. Contacts proteins S9 and S11.

One of the primary rRNA binding proteins, it binds directly to 16S rRNA where it nucleates assembly of the head domain of the 30S subunit. Is located at the subunit interface close to the decoding center, probably blocks exit of the E-site tRNA. This is Small ribosomal subunit protein uS7 from Rhizobium johnstonii (strain DSM 114642 / LMG 32736 / 3841) (Rhizobium leguminosarum bv. viciae).